The following is a 183-amino-acid chain: Alkyl hydroperoxide reductase AhpD (183 aa).

Residue Cys132 is the Proton donor of the active site. Residues Cys132 and Cys135 are joined by a disulfide bond. Cys135 (cysteine sulfenic acid (-SOH) intermediate) is an active-site residue.

It belongs to the AhpD family.

The catalysed reaction is N(6)-[(R)-dihydrolipoyl]-L-lysyl-[lipoyl-carrier protein] + a hydroperoxide = N(6)-[(R)-lipoyl]-L-lysyl-[lipoyl-carrier protein] + an alcohol + H2O. Functionally, antioxidant protein with alkyl hydroperoxidase activity. Required for the reduction of the AhpC active site cysteine residues and for the regeneration of the AhpC enzyme activity. This chain is Alkyl hydroperoxide reductase AhpD, found in Acidobacterium capsulatum (strain ATCC 51196 / DSM 11244 / BCRC 80197 / JCM 7670 / NBRC 15755 / NCIMB 13165 / 161).